A 481-amino-acid polypeptide reads, in one-letter code: Proline--tRNA ligase (481 aa).

This sequence belongs to the class-II aminoacyl-tRNA synthetase family. ProS type 3 subfamily. Homodimer.

The protein localises to the cytoplasm. The enzyme catalyses tRNA(Pro) + L-proline + ATP = L-prolyl-tRNA(Pro) + AMP + diphosphate. In terms of biological role, catalyzes the attachment of proline to tRNA(Pro) in a two-step reaction: proline is first activated by ATP to form Pro-AMP and then transferred to the acceptor end of tRNA(Pro). The polypeptide is Proline--tRNA ligase (Pelodictyon phaeoclathratiforme (strain DSM 5477 / BU-1)).